The chain runs to 233 residues: Probable septum site-determining protein MinC (233 aa).

Residues 104 to 124 are disordered; sequence QKMATPEPAPAPAPVVDPNAP.

Belongs to the MinC family. As to quaternary structure, interacts with MinD and FtsZ.

Cell division inhibitor that blocks the formation of polar Z ring septums. Rapidly oscillates between the poles of the cell to destabilize FtsZ filaments that have formed before they mature into polar Z rings. Prevents FtsZ polymerization. This Serratia proteamaculans (strain 568) protein is Probable septum site-determining protein MinC.